The primary structure comprises 291 residues: Ribosomal RNA small subunit methyltransferase A (291 aa).

Residues histidine 21, leucine 23, glycine 48, glutamate 70, aspartate 95, and asparagine 115 each contribute to the S-adenosyl-L-methionine site.

The protein belongs to the class I-like SAM-binding methyltransferase superfamily. rRNA adenine N(6)-methyltransferase family. RsmA subfamily.

The protein localises to the cytoplasm. It carries out the reaction adenosine(1518)/adenosine(1519) in 16S rRNA + 4 S-adenosyl-L-methionine = N(6)-dimethyladenosine(1518)/N(6)-dimethyladenosine(1519) in 16S rRNA + 4 S-adenosyl-L-homocysteine + 4 H(+). Functionally, specifically dimethylates two adjacent adenosines (A1518 and A1519) in the loop of a conserved hairpin near the 3'-end of 16S rRNA in the 30S particle. May play a critical role in biogenesis of 30S subunits. This chain is Ribosomal RNA small subunit methyltransferase A, found in Prochlorococcus marinus (strain NATL2A).